Here is a 1207-residue protein sequence, read N- to C-terminus: DNA-directed RNA polymerase subunit beta' (1207 aa).

Cys-60, Cys-62, Cys-75, and Cys-78 together coordinate Zn(2+). Asp-450, Asp-452, and Asp-454 together coordinate Mg(2+). Residues Cys-819, Cys-893, Cys-900, and Cys-903 each contribute to the Zn(2+) site.

This sequence belongs to the RNA polymerase beta' chain family. In terms of assembly, the RNAP catalytic core consists of 2 alpha, 1 beta, 1 beta' and 1 omega subunit. When a sigma factor is associated with the core the holoenzyme is formed, which can initiate transcription. Mg(2+) serves as cofactor. Requires Zn(2+) as cofactor.

The catalysed reaction is RNA(n) + a ribonucleoside 5'-triphosphate = RNA(n+1) + diphosphate. DNA-dependent RNA polymerase catalyzes the transcription of DNA into RNA using the four ribonucleoside triphosphates as substrates. This is DNA-directed RNA polymerase subunit beta' from Streptococcus pyogenes serotype M3 (strain SSI-1).